Consider the following 332-residue polypeptide: Ketol-acid reductoisomerase (NADP(+)) (332 aa).

The KARI N-terminal Rossmann domain maps to 1-182 (MAQVWKDAEI…GSARAGLIKT (182 aa)). Residues 25–28 (YGIQ), lysine 48, serine 53, and 83–86 (DMIQ) each bind NADP(+). Histidine 108 is a catalytic residue. Position 134 (glycine 134) interacts with NADP(+). A KARI C-terminal knotted domain is found at 183–329 (TFKEEVETDW…RKMRKMMWPD (147 aa)). Residues aspartate 191, glutamate 195, glutamate 227, and glutamate 231 each contribute to the Mg(2+) site. A substrate-binding site is contributed by serine 252.

It belongs to the ketol-acid reductoisomerase family. Mg(2+) is required as a cofactor.

The enzyme catalyses (2R)-2,3-dihydroxy-3-methylbutanoate + NADP(+) = (2S)-2-acetolactate + NADPH + H(+). It catalyses the reaction (2R,3R)-2,3-dihydroxy-3-methylpentanoate + NADP(+) = (S)-2-ethyl-2-hydroxy-3-oxobutanoate + NADPH + H(+). It participates in amino-acid biosynthesis; L-isoleucine biosynthesis; L-isoleucine from 2-oxobutanoate: step 2/4. The protein operates within amino-acid biosynthesis; L-valine biosynthesis; L-valine from pyruvate: step 2/4. In terms of biological role, involved in the biosynthesis of branched-chain amino acids (BCAA). Catalyzes an alkyl-migration followed by a ketol-acid reduction of (S)-2-acetolactate (S2AL) to yield (R)-2,3-dihydroxy-isovalerate. In the isomerase reaction, S2AL is rearranged via a Mg-dependent methyl migration to produce 3-hydroxy-3-methyl-2-ketobutyrate (HMKB). In the reductase reaction, this 2-ketoacid undergoes a metal-dependent reduction by NADPH to yield (R)-2,3-dihydroxy-isovalerate. In Cenarchaeum symbiosum (strain A), this protein is Ketol-acid reductoisomerase (NADP(+)).